Here is a 303-residue protein sequence, read N- to C-terminus: tRNA dimethylallyltransferase (303 aa).

12-19 serves as a coordination point for ATP; the sequence is GPTGVGKT. A substrate-binding site is contributed by 14 to 19; sequence TGVGKT. The interval 37–40 is interaction with substrate tRNA; the sequence is DSAQ.

Belongs to the IPP transferase family. As to quaternary structure, monomer. Mg(2+) serves as cofactor.

It carries out the reaction adenosine(37) in tRNA + dimethylallyl diphosphate = N(6)-dimethylallyladenosine(37) in tRNA + diphosphate. Its function is as follows. Catalyzes the transfer of a dimethylallyl group onto the adenine at position 37 in tRNAs that read codons beginning with uridine, leading to the formation of N6-(dimethylallyl)adenosine (i(6)A). The polypeptide is tRNA dimethylallyltransferase (Fusobacterium nucleatum subsp. nucleatum (strain ATCC 25586 / DSM 15643 / BCRC 10681 / CIP 101130 / JCM 8532 / KCTC 2640 / LMG 13131 / VPI 4355)).